A 474-amino-acid polypeptide reads, in one-letter code: Trehalose-6-phosphate synthase (474 aa).

D-glucose 6-phosphate is bound at residue Arg10. 22–23 (GG) is a binding site for UDP-alpha-D-glucose. Residues Tyr77 and Asp131 each coordinate D-glucose 6-phosphate. Residues Arg263 and Lys268 each contribute to the UDP-alpha-D-glucose site. A D-glucose 6-phosphate-binding site is contributed by Arg301. UDP-alpha-D-glucose is bound by residues Phe340 and 366 to 370 (LVAKE).

This sequence belongs to the glycosyltransferase 20 family. In terms of assembly, homotetramer.

It carries out the reaction D-glucose 6-phosphate + UDP-alpha-D-glucose = alpha,alpha-trehalose 6-phosphate + UDP + H(+). It participates in glycan biosynthesis; trehalose biosynthesis. In terms of biological role, probably involved in the osmoprotection via the biosynthesis of trehalose. Catalyzes the transfer of glucose from UDP-alpha-D-glucose (UDP-Glc) to D-glucose 6-phosphate (Glc-6-P) to form trehalose-6-phosphate. Acts with retention of the anomeric configuration of the UDP-sugar donor. This chain is Trehalose-6-phosphate synthase, found in Cronobacter sakazakii (strain ATCC BAA-894) (Enterobacter sakazakii).